Reading from the N-terminus, the 810-residue chain is Cell division control protein 48 homolog E (810 aa).

Serine 2 is subject to N-acetylserine. The residue at position 41 (serine 41) is a Phosphoserine. ATP-binding positions include 248–255 (GPPGSGKT) and 521–528 (GPPGCGKT).

Belongs to the AAA ATPase family.

The protein resides in the nucleus. The protein localises to the cytoplasm. It localises to the cytoskeleton. Its subcellular location is the phragmoplast. Probably functions in cell division and growth processes. Interacts with certain SNAREs as part of specialized membrane fusion events where vesicles from the same organelle fuse (homotypic fusion). In Arabidopsis thaliana (Mouse-ear cress), this protein is Cell division control protein 48 homolog E (CDC48E).